The sequence spans 443 residues: Phosphoglucosamine mutase (443 aa).

Ser102 serves as the catalytic Phosphoserine intermediate. Mg(2+) is bound by residues Ser102, Asp241, Asp243, and Asp245. Position 102 is a phosphoserine (Ser102).

This sequence belongs to the phosphohexose mutase family. Requires Mg(2+) as cofactor. Post-translationally, activated by phosphorylation.

The enzyme catalyses alpha-D-glucosamine 1-phosphate = D-glucosamine 6-phosphate. Its function is as follows. Catalyzes the conversion of glucosamine-6-phosphate to glucosamine-1-phosphate. This Acinetobacter baylyi (strain ATCC 33305 / BD413 / ADP1) protein is Phosphoglucosamine mutase.